The primary structure comprises 324 residues: MKRNIAIVAGGDTSEIVVSLRSAQGIYSFIDKEKYNLYIVEMEGRRWEVQLQDGSKTPVDRNDFSFMNGAEKVVFDFAYITIHGTPGEDGRLQGYFDMIRIPYSCCGVLAAAITYDKFVCNQYLKAFGVRISESLLLRQGQAVSDEDVVEKIGLPCFIKPNLGGSSFGVTKVKTREQIQPAIAKAFSEAEEVMIEAFMGGTELTCGCYKTKEKSVVFPLTEVVTHNEFFDYDAKYNGQVDEITPARISEELTRRVQTLTSAIYDILGCSGIIRVDYIITEGEKINLLEVNTTPGMTATSFIPQQVRAAGLDIKDVMTDIIENKF.

The ATP-grasp domain maps to 121 to 321 (NQYLKAFGVR…IKDVMTDIIE (201 aa)). Residue 149-204 (VEKIGLPCFIKPNLGGSSFGVTKVKTREQIQPAIAKAFSEAEEVMIEAFMGGTELT) participates in ATP binding. Mg(2+)-binding residues include D275, E288, and N290.

It belongs to the D-alanine--D-alanine ligase family. Mg(2+) is required as a cofactor. Mn(2+) serves as cofactor.

The protein resides in the cytoplasm. The enzyme catalyses 2 D-alanine + ATP = D-alanyl-D-alanine + ADP + phosphate + H(+). It functions in the pathway cell wall biogenesis; peptidoglycan biosynthesis. Cell wall formation. In Bacteroides fragilis (strain ATCC 25285 / DSM 2151 / CCUG 4856 / JCM 11019 / LMG 10263 / NCTC 9343 / Onslow / VPI 2553 / EN-2), this protein is D-alanine--D-alanine ligase.